The primary structure comprises 259 residues: Protein FAM220A (259 aa).

A disordered region spans residues 29–66 (GLKRRSEKRNPSPSDVPSWTDQPVADTHGKSRAMAAAS). Over residues 39–49 (PSPSDVPSWTD) the composition is skewed to polar residues.

In terms of assembly, interacts with transcriptional activator STAT3; the interaction occurs in both the nucleus and the cytoplasm, is enhanced by IL6 and promotes STAT3 dephosphorylation, leading to negative regulation of STAT3 transcriptional activator activity. Can interact with both unphosphorylated and phosphorylated STAT3 but interacts preferentially with phosphorylated STAT3 in the nucleus. Interacts with protein phosphatase PTPN2/TC45; this promotes interaction of PTPN2 with STAT3, leading to dephosphorylation of STAT3 by PTPN2.

It localises to the nucleus. The protein localises to the cytoplasm. The protein resides in the cytoplasmic vesicle. It is found in the secretory vesicle. Its subcellular location is the acrosome. Its function is as follows. Promotes dephosphorylation of transcriptional activator STAT3 by interacting with both STAT3 and protein phosphatase PTPN2. This promotes interaction of PTPN2 with STAT3 and mediates STAT3 dephosphorylation by PTPN2, leading to negative regulation of STAT3 transcriptional activator activity. May be required for spermiogenesis or sperm function. The sequence is that of Protein FAM220A (Fam220a) from Rattus norvegicus (Rat).